We begin with the raw amino-acid sequence, 1527 residues long: DNA-directed RNA polymerase subunit beta'' (1527 aa).

Residues cysteine 220, cysteine 296, cysteine 303, and cysteine 306 each contribute to the Zn(2+) site. 2 stretches are compositionally biased toward basic and acidic residues: residues arginine 644–glutamate 661 and proline 671–glutamate 681. Disordered regions lie at residues arginine 644–glutamate 681 and tyrosine 712–glycine 793. Acidic residues-rich tracts occupy residues glycine 737–aspartate 755 and threonine 763–aspartate 786.

Belongs to the RNA polymerase beta' chain family. RpoC2 subfamily. As to quaternary structure, in plastids the minimal PEP RNA polymerase catalytic core is composed of four subunits: alpha, beta, beta', and beta''. When a (nuclear-encoded) sigma factor is associated with the core the holoenzyme is formed, which can initiate transcription. Zn(2+) is required as a cofactor.

Its subcellular location is the plastid. The protein localises to the chloroplast. The enzyme catalyses RNA(n) + a ribonucleoside 5'-triphosphate = RNA(n+1) + diphosphate. Its function is as follows. DNA-dependent RNA polymerase catalyzes the transcription of DNA into RNA using the four ribonucleoside triphosphates as substrates. This Zea mays (Maize) protein is DNA-directed RNA polymerase subunit beta''.